The primary structure comprises 339 residues: UDP-N-acetylglucosamine--N-acetylmuramyl-(pentapeptide) pyrophosphoryl-undecaprenol N-acetylglucosamine transferase (339 aa).

UDP-N-acetyl-alpha-D-glucosamine is bound by residues 11–13 (TGG), Asn127, Arg170, Ser188, Ile235, and Gln280.

This sequence belongs to the glycosyltransferase 28 family. MurG subfamily.

The protein localises to the cell inner membrane. The catalysed reaction is di-trans,octa-cis-undecaprenyl diphospho-N-acetyl-alpha-D-muramoyl-L-alanyl-D-glutamyl-meso-2,6-diaminopimeloyl-D-alanyl-D-alanine + UDP-N-acetyl-alpha-D-glucosamine = di-trans,octa-cis-undecaprenyl diphospho-[N-acetyl-alpha-D-glucosaminyl-(1-&gt;4)]-N-acetyl-alpha-D-muramoyl-L-alanyl-D-glutamyl-meso-2,6-diaminopimeloyl-D-alanyl-D-alanine + UDP + H(+). It functions in the pathway cell wall biogenesis; peptidoglycan biosynthesis. In terms of biological role, cell wall formation. Catalyzes the transfer of a GlcNAc subunit on undecaprenyl-pyrophosphoryl-MurNAc-pentapeptide (lipid intermediate I) to form undecaprenyl-pyrophosphoryl-MurNAc-(pentapeptide)GlcNAc (lipid intermediate II). The sequence is that of UDP-N-acetylglucosamine--N-acetylmuramyl-(pentapeptide) pyrophosphoryl-undecaprenol N-acetylglucosamine transferase from Thermotoga maritima (strain ATCC 43589 / DSM 3109 / JCM 10099 / NBRC 100826 / MSB8).